Reading from the N-terminus, the 451-residue chain is Phosphoglucosamine mutase (451 aa).

The active-site Phosphoserine intermediate is the S101. Mg(2+) is bound by residues S101, D240, D242, and D244. Position 101 is a phosphoserine (S101).

This sequence belongs to the phosphohexose mutase family. Mg(2+) is required as a cofactor. Post-translationally, activated by phosphorylation.

The catalysed reaction is alpha-D-glucosamine 1-phosphate = D-glucosamine 6-phosphate. Functionally, catalyzes the conversion of glucosamine-6-phosphate to glucosamine-1-phosphate. In Streptococcus pyogenes serotype M12 (strain MGAS2096), this protein is Phosphoglucosamine mutase.